The primary structure comprises 160 residues: Cytochrome b6-f complex subunit 4 (160 aa).

Transmembrane regions (helical) follow at residues 36-56 (LLYV…GLAI), 95-115 (LLGI…PFIE), and 131-151 (AIFL…TFPI).

This sequence belongs to the cytochrome b family. PetD subfamily. The 4 large subunits of the cytochrome b6-f complex are cytochrome b6, subunit IV (17 kDa polypeptide, PetD), cytochrome f and the Rieske protein, while the 4 small subunits are PetG, PetL, PetM and PetN. The complex functions as a dimer.

The protein resides in the cellular thylakoid membrane. Its function is as follows. Component of the cytochrome b6-f complex, which mediates electron transfer between photosystem II (PSII) and photosystem I (PSI), cyclic electron flow around PSI, and state transitions. The protein is Cytochrome b6-f complex subunit 4 of Microcystis aeruginosa (strain NIES-843 / IAM M-2473).